A 228-amino-acid polypeptide reads, in one-letter code: MKSVGLEEMMEAGVHFGHQTRGWNPKMSSYIYGNRNGIHLIDLVQTARLLSEACDFLFNAAKEGKEFLFVGTKSQASDIIASEALRAESHYVNQRWLGGMLTNWSTIKTRIRKLKDLEQKEKNGILDTLPKKEAAVLKRQLYKLRKYLSGLQDMKYLPDVVIIVDQKREINAVKECIKLGIPTISLVDTNCDPTLADLPIPANDDAIRSINLLVSKLADAIYEGQRVK.

The protein belongs to the universal ribosomal protein uS2 family.

It is found in the plastid. Its subcellular location is the chloroplast. The chain is Small ribosomal subunit protein uS2c (rps2) from Mesostigma viride (Green alga).